Reading from the N-terminus, the 336-residue chain is Protein-glutamate methylesterase/protein-glutamine glutaminase 3 (336 aa).

The 118-residue stretch at 2 to 119 folds into the Response regulatory domain; it reads KIAIVNDMPM…PNPKEAAAPL (118 aa). Position 53 is a 4-aspartylphosphate (Asp53). The region spanning 147–336 is the CheB-type methylesterase domain; the sequence is PARRDRLVAI…APRLVEVFTQ (190 aa). Residues Ser159, His186, and Asp279 contribute to the active site.

It belongs to the CheB family. Post-translationally, phosphorylated by CheA. Phosphorylation of the N-terminal regulatory domain activates the methylesterase activity.

The protein resides in the cytoplasm. The catalysed reaction is [protein]-L-glutamate 5-O-methyl ester + H2O = L-glutamyl-[protein] + methanol + H(+). The enzyme catalyses L-glutaminyl-[protein] + H2O = L-glutamyl-[protein] + NH4(+). Its function is as follows. Involved in chemotaxis. Part of a chemotaxis signal transduction system that modulates chemotaxis in response to various stimuli. Catalyzes the demethylation of specific methylglutamate residues introduced into the chemoreceptors (methyl-accepting chemotaxis proteins or MCP) by CheR. Also mediates the irreversible deamidation of specific glutamine residues to glutamic acid. This chain is Protein-glutamate methylesterase/protein-glutamine glutaminase 3, found in Pseudomonas savastanoi pv. phaseolicola (strain 1448A / Race 6) (Pseudomonas syringae pv. phaseolicola (strain 1448A / Race 6)).